The primary structure comprises 426 residues: C4-dicarboxylate transport protein (426 aa).

Helical transmembrane passes span 8–28, 44–64, 78–98, 148–168, 173–193, 222–242, 297–317, and 355–375; these read VLYVQVIVAIIIGIGLGHFYP, LIKMVIGPIIFCTVVTGIAGM, LLYFEIVSTFALVLGLIATHV, GEILQILLIALLFGAVLATAG, VVTGFIDGLSHVLFGIVRIIT, LIGTFYLTSVVFVVVVLGIIA, GYSFNLDGTNIYMTMAVLFIA, and AATLAVVPTIPLSGMVLILGI.

It belongs to the dicarboxylate/amino acid:cation symporter (DAACS) (TC 2.A.23) family.

It is found in the cell inner membrane. Functionally, responsible for the transport of dicarboxylates such as succinate, fumarate, and malate from the periplasm across the membrane. This is C4-dicarboxylate transport protein from Paraburkholderia xenovorans (strain LB400).